Reading from the N-terminus, the 357-residue chain is Holliday junction branch migration complex subunit RuvB (357 aa).

The interval 1–27 (MGRFDDAGAQDAEPDDRDVSPALTVGE) is disordered. Residues 1–195 (MGRFDDAGAQ…FGFTAHMDFY (195 aa)) form a large ATPase domain (RuvB-L) region. ATP-binding positions include Leu-34, Arg-35, Gly-76, Lys-79, Thr-80, Ser-81, 142 to 144 (EDF), Arg-185, Tyr-195, and Arg-232. Position 80 (Thr-80) interacts with Mg(2+). The segment at 196 to 266 (EPAELERVLA…IAKAALEVYD (71 aa)) is small ATPAse domain (RuvB-S). A head domain (RuvB-H) region spans residues 269–357 (ELGLDRLDRA…TGLGQTGLFD (89 aa)). Positions 324 and 329 each coordinate DNA.

Belongs to the RuvB family. Homohexamer. Forms an RuvA(8)-RuvB(12)-Holliday junction (HJ) complex. HJ DNA is sandwiched between 2 RuvA tetramers; dsDNA enters through RuvA and exits via RuvB. An RuvB hexamer assembles on each DNA strand where it exits the tetramer. Each RuvB hexamer is contacted by two RuvA subunits (via domain III) on 2 adjacent RuvB subunits; this complex drives branch migration. In the full resolvosome a probable DNA-RuvA(4)-RuvB(12)-RuvC(2) complex forms which resolves the HJ.

It localises to the cytoplasm. The catalysed reaction is ATP + H2O = ADP + phosphate + H(+). In terms of biological role, the RuvA-RuvB-RuvC complex processes Holliday junction (HJ) DNA during genetic recombination and DNA repair, while the RuvA-RuvB complex plays an important role in the rescue of blocked DNA replication forks via replication fork reversal (RFR). RuvA specifically binds to HJ cruciform DNA, conferring on it an open structure. The RuvB hexamer acts as an ATP-dependent pump, pulling dsDNA into and through the RuvAB complex. RuvB forms 2 homohexamers on either side of HJ DNA bound by 1 or 2 RuvA tetramers; 4 subunits per hexamer contact DNA at a time. Coordinated motions by a converter formed by DNA-disengaged RuvB subunits stimulates ATP hydrolysis and nucleotide exchange. Immobilization of the converter enables RuvB to convert the ATP-contained energy into a lever motion, pulling 2 nucleotides of DNA out of the RuvA tetramer per ATP hydrolyzed, thus driving DNA branch migration. The RuvB motors rotate together with the DNA substrate, which together with the progressing nucleotide cycle form the mechanistic basis for DNA recombination by continuous HJ branch migration. Branch migration allows RuvC to scan DNA until it finds its consensus sequence, where it cleaves and resolves cruciform DNA. The protein is Holliday junction branch migration complex subunit RuvB of Mycobacterium sp. (strain JLS).